The sequence spans 92 residues: Small ribosomal subunit protein uS19 (92 aa).

It belongs to the universal ribosomal protein uS19 family.

Protein S19 forms a complex with S13 that binds strongly to the 16S ribosomal RNA. In Mycoplasmopsis agalactiae (strain NCTC 10123 / CIP 59.7 / PG2) (Mycoplasma agalactiae), this protein is Small ribosomal subunit protein uS19.